The following is a 428-amino-acid chain: U2 small nuclear ribonucleoprotein auxiliary factor 35 kDa subunit-related protein 2-like (428 aa).

Residues 1–51 (MASRQTAIPEKLSRKQYKAAMKKEKRKKRRQKMARLRALEAPPEEDDDVSA) form a disordered region. Residues 23–35 (KEKRKKRRQKMAR) are compositionally biased toward basic residues. Over residues 42–51 (PPEEDDDVSA) the composition is skewed to acidic residues. Residue Ser50 is modified to Phosphoserine. A C3H1-type 1 zinc finger spans residues 157 to 185 (EKYRPSCPFYNKTGACRFGNRCSRKHDFP). The 107-residue stretch at 189–295 (PTLLVKSMFT…RQLQCEFCPV (107 aa)) folds into the RRM domain. The C3H1-type 2 zinc-finger motif lies at 297 to 324 (RWKVAICGLFEMQKCPKGKHCNFLHVFR). The segment at 339–428 (MSPPAWTGSS…PGPQSQSHRT (90 aa)) is disordered. At Ser340 the chain carries Phosphoserine. Positions 351–366 (NSDRRERKDHHEEYYS) are enriched in basic and acidic residues. Low complexity predominate over residues 367 to 377 (KSRSYHSGSYH). Ser375 carries the post-translational modification Phosphoserine. Residues 389–410 (SPHRWKKSHKQTTKSHERHSSR) show a composition bias toward basic residues. Positions 419–428 (PGPQSQSHRT) are enriched in polar residues.

As to quaternary structure, interacts with SF3B1. Interacts with ZCRB1. As to expression, highest expression levels are detected in the brain, and lower expression levels in other tissues like epididymis, testis, bone marrow or muscle. In testis, expressed in both Sertoli and spermatogenic cell.

Its subcellular location is the nucleus. In terms of biological role, plays a role in splicing of the U12-type introns. Implicated also in removal of U2 introns positioned adjacent to a U12 intron. This is U2 small nuclear ribonucleoprotein auxiliary factor 35 kDa subunit-related protein 2-like from Mus musculus (Mouse).